Here is a 289-residue protein sequence, read N- to C-terminus: WUSCHEL-related homeobox 1 (289 aa).

Low complexity predominate over residues 1–11 (MDHMQQQQRQQ). Residues 1 to 34 (MDHMQQQQRQQVGGGGGEEVAGRGGVPVCRPSGT) are disordered. A compositionally biased stretch (gly residues) spans 12 to 25 (VGGGGGEEVAGRGG). The homeobox; WUS-type DNA-binding region spans 31–96 (PSGTRWTPTT…NHKARERQKK (66 aa)).

The protein belongs to the WUS homeobox family. In terms of assembly, interacts with TPR1, TPR2 and TPR3. Expressed in young leaf primordia. Expressed in branch an floral meristems. Transiently expressed in the shoot apex.

The protein localises to the nucleus. In terms of biological role, transcription repressor required for the formation and development of tiller buds and panicles. Required for tiller formation and female sterility. Required for the early developmental stages of axillary meristem formation. Plays a role in maintaining the axillary premeristem zone and in promoting the formation of the axillary meristem by promoting OSH1 expression. Does not seem to be involved in maintenance of the shoot apical meristem (SAM). The polypeptide is WUSCHEL-related homeobox 1 (Oryza sativa subsp. japonica (Rice)).